Consider the following 416-residue polypeptide: Nuclear hormone receptor family member nhr-67 (416 aa).

The segment at residues 18-98 is a DNA-binding region (nuclear receptor); sequence DVDCRVCEDH…IGMNKDAVQH (81 aa). 2 consecutive NR C4-type zinc fingers follow at residues 21-41 and 57-86; these read CRVC…CDGC and CKNK…LRKC. Positions 331–398 are disordered; the sequence is KTETEEGEDI…SSRPRHSIRS (68 aa). The segment covering 335–346 has biased composition (acidic residues); it reads EEGEDIEEEDDA. A compositionally biased stretch (low complexity) spans 377 to 390; it reads SSTQPSSASSPSSS.

The protein belongs to the nuclear hormone receptor family. In terms of tissue distribution, expressed in linker cell.

It localises to the nucleus. Functionally, orphan nuclear receptor that binds DNA containing an extended core motif half-site sequence 5'-AAGTCA-3'. In males, plays an essential role in the migration of the linker cell which guides gonad elongation during the L3 and L4 stages of larval development by negatively regulating the expression of netrin receptor unc-5 at the mid-L3 stage. Involved in the regulation of non-apoptotic cell death in the linker cell, acting upstream of or in parallel to transcription factor hsf-1. Represses hypoxia response genes, fmo-2 and acs-2, in both normoxic and hypoxic conditions, probably acting via repression of nuclear receptor nhr-49. This is Nuclear hormone receptor family member nhr-67 (nhr-67) from Caenorhabditis elegans.